Here is a 338-residue protein sequence, read N- to C-terminus: Holliday junction branch migration complex subunit RuvB (338 aa).

A large ATPase domain (RuvB-L) region spans residues 1-181 (MTTRTISPEK…FGVISRLEFY (181 aa)). Residues leucine 20, arginine 21, glycine 62, lysine 65, threonine 66, threonine 67, 128–130 (EDF), arginine 171, tyrosine 181, and arginine 218 each bind ATP. Threonine 66 contacts Mg(2+). The small ATPAse domain (RuvB-S) stretch occupies residues 182-252 (TDAELSTIVT…VVDESLKLLE (71 aa)). The interval 255 to 338 (EKGFDQMDRT…APAPGQGALF (84 aa)) is head domain (RuvB-H). Residues arginine 291, arginine 310, and arginine 315 each coordinate DNA.

Belongs to the RuvB family. As to quaternary structure, homohexamer. Forms an RuvA(8)-RuvB(12)-Holliday junction (HJ) complex. HJ DNA is sandwiched between 2 RuvA tetramers; dsDNA enters through RuvA and exits via RuvB. An RuvB hexamer assembles on each DNA strand where it exits the tetramer. Each RuvB hexamer is contacted by two RuvA subunits (via domain III) on 2 adjacent RuvB subunits; this complex drives branch migration. In the full resolvosome a probable DNA-RuvA(4)-RuvB(12)-RuvC(2) complex forms which resolves the HJ.

The protein localises to the cytoplasm. It carries out the reaction ATP + H2O = ADP + phosphate + H(+). The RuvA-RuvB-RuvC complex processes Holliday junction (HJ) DNA during genetic recombination and DNA repair, while the RuvA-RuvB complex plays an important role in the rescue of blocked DNA replication forks via replication fork reversal (RFR). RuvA specifically binds to HJ cruciform DNA, conferring on it an open structure. The RuvB hexamer acts as an ATP-dependent pump, pulling dsDNA into and through the RuvAB complex. RuvB forms 2 homohexamers on either side of HJ DNA bound by 1 or 2 RuvA tetramers; 4 subunits per hexamer contact DNA at a time. Coordinated motions by a converter formed by DNA-disengaged RuvB subunits stimulates ATP hydrolysis and nucleotide exchange. Immobilization of the converter enables RuvB to convert the ATP-contained energy into a lever motion, pulling 2 nucleotides of DNA out of the RuvA tetramer per ATP hydrolyzed, thus driving DNA branch migration. The RuvB motors rotate together with the DNA substrate, which together with the progressing nucleotide cycle form the mechanistic basis for DNA recombination by continuous HJ branch migration. Branch migration allows RuvC to scan DNA until it finds its consensus sequence, where it cleaves and resolves cruciform DNA. The polypeptide is Holliday junction branch migration complex subunit RuvB (Geobacter sulfurreducens (strain ATCC 51573 / DSM 12127 / PCA)).